Reading from the N-terminus, the 528-residue chain is Zinc finger protein 16-like (528 aa).

The tract at residues 1-28 is disordered; that stretch reads MSRKRNHCYMETGASSESQGAFVDSAGP. Residues 79 to 106 are a coiled coil; the sequence is IRVLKMELREKSDEIELLKAKLESAEKD. 2 disordered regions span residues 159–202 and 232–293; these read GAAE…TDAE and FKGD…DRME. Over residues 232 to 242 the composition is skewed to basic and acidic residues; the sequence is FKGDSETKCED. Acidic residues predominate over residues 244 to 256; it reads PPMDEEDENEDSE. 2 stretches are compositionally biased toward basic and acidic residues: residues 257–270 and 278–293; these read EGRGSLRSVSDHFP and GEDRSSPAEDSMDRME. The C2H2-type 1 zinc finger occupies 303-326; that stretch reads FICPFCGTLCPDSSFLEEHIKLMH. Positions 333 to 345 are enriched in low complexity; that stretch reads QSTSAGSSSQAEG. Positions 333 to 359 are disordered; that stretch reads QSTSAGSSSQAEGDSGEAGPASRGARE. C2H2-type zinc fingers lie at residues 366-388, 394-416, 423-445, and 451-473; these read YECGDCGRHFNYLGNLRQHQRIH, FVCPECGERFRHTARLKSHRLSH, FPCPQCGKGFPVLSGLKRHQRVH, and YACPQCGRRFKELGNLYTHMRIH. The C2H2-type 6; degenerate zinc-finger motif lies at 479–501; that stretch reads YTCYQCGRSFRHLGTYKSHRCMP. Residues 502–528 form a disordered region; it reads ATQMPSEHSPPWAQEDKVQTGRLQGYV.

This sequence belongs to the krueppel C2H2-type zinc-finger protein family.

The protein resides in the nucleus. Functionally, probable transcription factor. Important for development and migration of oligodendrocyte precursor cells, and normal myelination of axons in the central nervous system (CNS). Functions autonomously in oligodendrocytes to promote CNS myelination. Seems to act in parallel with notch3 during oligodendrocyte development. The protein is Zinc finger protein 16-like of Danio rerio (Zebrafish).